The sequence spans 147 residues: Small ribosomal subunit protein uS5 (147 aa).

An S5 DRBM domain is found at 9–72; sequence FEEVIVDIGR…DDAFKNIVEV (64 aa).

This sequence belongs to the universal ribosomal protein uS5 family. Part of the 30S ribosomal subunit. Contacts proteins S4 and S8.

In terms of biological role, with S4 and S12 plays an important role in translational accuracy. Its function is as follows. Located at the back of the 30S subunit body where it stabilizes the conformation of the head with respect to the body. The sequence is that of Small ribosomal subunit protein uS5 from Campylobacter fetus subsp. fetus (strain 82-40).